The chain runs to 388 residues: MNSALKAIIELCIEEDLLPKSLDVLEYLLSTTSIPIPACYIRMCITLLVHPEYPTSSNIQESCNWILQQVVENRSKINFDAWSFENDLSDNDMPKENYLKIFSNQCLFTQDVDYWDLIAYMSSRPPDLERWMSLMDIWLRILEIDAEENGSALMKKYMGEDLCELQDAIRICFSCFTLPQQTMESPFATSMSKAPAKTESRGSNSFEGTSRLANLGAKLLCLIWAMLPKGRFFVVHLTDAFHFLSKLDERFSKLNAKQQDLFFGNLGASNLRYCLSQYILMKGIGIGINIRHTRCEFTKQLTQLLPTSLPKNKIRQKLHLRAWVSFLGSALRESDRNFDKELFYTTLKQLYTMYQQTELVGIDRPMAILKDMLVLLDISKKLSLDKIV.

In terms of assembly, component of the smc5/smc6 complex which consists of two subcomplexes, smc5-smc6-nse2 and nse1-nse2-nse4. Interacts with nse6 and rfp1.

Its subcellular location is the cytoplasm. It is found in the nucleus. The protein localises to the chromosome. Functionally, acts in a DNA repair pathway for removal of UV-induced DNA damage that is distinct from classical nucleotide excision repair and in repair of ionizing radiation damage. Functions in homologous recombination repair of DNA double strand breaks and in recovery of stalled replication forks. May prevent formation of excessive Holliday junctions or assist in their resolution. This chain is Non-structural maintenance of chromosome element 5 (nse5), found in Schizosaccharomyces pombe (strain 972 / ATCC 24843) (Fission yeast).